A 529-amino-acid polypeptide reads, in one-letter code: DnaJ homolog l(2)tid, mitochondrial (529 aa).

The N-terminal 22 residues, 1–22 (MISCKNLCVLRQLPLKNCRRHY), are a transit peptide targeting the mitochondrion. The residue at position 35 (arginine 35) is an Omega-N-methylarginine. The region spanning 80 to 145 (DYYATLGVAK…QKRREYDTYG (66 aa)) is the J domain. Lysine 121 carries the post-translational modification N6-acetyllysine. The CR-type zinc-finger motif lies at 230-308 (GVNKDVNVNV…CEGKGQTVQR (79 aa)). The Zn(2+) site is built by cysteine 243, cysteine 246, cysteine 260, cysteine 263, cysteine 282, cysteine 285, cysteine 296, and cysteine 299. One copy of the CXXCXGXG motif; approximate repeat lies at 243 to 250 (CPKCAGSK). The CXXCXGXG motif repeat unit spans residues 260–267 (CQYCNGTG). Residues 282-289 (CRYCQGTR) form a CXXCXGXG motif; approximate repeat. The stretch at 296 to 303 (CAECEGKG) is one CXXCXGXG motif repeat. Residues 441–529 (TPGQIHGMAQ…FLNKIKSMFN (89 aa)) form a disordered region. A compositionally biased stretch (basic and acidic residues) spans 497-508 (QSEKSETRRKDQ).

Its subcellular location is the mitochondrion outer membrane. In terms of biological role, may act as a tumor suppressor in larval imaginal disks. The protein is DnaJ homolog l(2)tid, mitochondrial (l(2)tid) of Drosophila virilis (Fruit fly).